Reading from the N-terminus, the 859-residue chain is DNA mismatch repair protein MutS (859 aa).

Position 622-629 (Gly622–Ser629) interacts with ATP.

Belongs to the DNA mismatch repair MutS family.

Its function is as follows. This protein is involved in the repair of mismatches in DNA. It is possible that it carries out the mismatch recognition step. This protein has a weak ATPase activity. This is DNA mismatch repair protein MutS from Coxiella burnetii (strain RSA 493 / Nine Mile phase I).